The primary structure comprises 351 residues: Terpene cyclase sdgD (351 aa).

9 consecutive transmembrane segments (helical) span residues 7–27 (INFI…TILI), 62–82 (TGVP…WPVI), 89–109 (LSLL…LLLL), 126–146 (WVGL…YCAI), 160–180 (IPHV…LVAL), 193–213 (VVVA…FMAS), 229–249 (IYIF…LASL), 281–301 (FLQW…VAVY), and 316–336 (LEVC…LLIW).

Belongs to the membrane-bound ascI terpene cyclase family.

It is found in the membrane. It participates in secondary metabolite biosynthesis. Functionally, epoxide hydrolase; part of the gene cluster that mediates the biosynthesis of the polyenes aspernidgulenes. The carbon backbone of aspernidgulenes is synthesized by the HR-PKS sdgA, which accepts acetyl-CoA as the starter unit and performs malonyl-CoA extensions as well as regioselective methylation and reduction. The resulting nonaketide offloads the HR-PKS by intramolecular lactonization to yield the 5,6-dihydro-alpha-pyrone-containing hexaenoic acids preaspernidgulene A1 and A2. The FAD-dependent monooxygenase sdgC then installs the first epoxide on the penultimate double bond. Subsequently, the FAD-dependent monooxygenase sdgF presumably generates a ketone intermediate through Meinwald rearrangement involving a hydride shift. Next, sdgC introduces another epoxide on the last olefin of the ketone intermediate after E/Z isomerization. The epoxide hydrolase sdgD then catalyzes stereospecific cyclization of the 5,6-dihydro-alpha-pyrone and opening of the epoxide ring to form an oxygenated trimethylcyclopentanone and an oxabicyclo[2.2.1]heptane unit. Finally, the bicyclic unit undergoes hydrolytic cleavage, either spontaneously or catalyzed by sdgD, to assemble the dimethyl-gamma-lactone moiety in aspernidgulene A1. The protein is Terpene cyclase sdgD of Emericella nidulans (strain FGSC A4 / ATCC 38163 / CBS 112.46 / NRRL 194 / M139) (Aspergillus nidulans).